The following is a 443-amino-acid chain: Tol-Pal system protein TolB (443 aa).

Residues 1–33 (MKIGIINTKIRTVFSAFACMIAASLVCTMPARA) form the signal peptide.

Belongs to the TolB family. In terms of assembly, the Tol-Pal system is composed of five core proteins: the inner membrane proteins TolA, TolQ and TolR, the periplasmic protein TolB and the outer membrane protein Pal. They form a network linking the inner and outer membranes and the peptidoglycan layer.

It is found in the periplasm. Functionally, part of the Tol-Pal system, which plays a role in outer membrane invagination during cell division and is important for maintaining outer membrane integrity. This is Tol-Pal system protein TolB from Brucella suis (strain ATCC 23445 / NCTC 10510).